Consider the following 478-residue polypeptide: MTTFVDRVELHVAAGNGGHGCASVHREKFKPLGGPDGGNGGRGGDVILTVDQSVTTLLDYHHSPHRKATNGKPGEGGNRSGKDGQDLVLPVPDGTVVLDGAGNVLADLVGHGTSYVAAQGGRGGLGNAALASARRKAPGFALLGEPGDLQDIHLELKTVADVALVGYPSAGKSSLISVLSAAKPKIADYPFTTLVPNLGVVTAGETVYTVADVPGLIPGASQGKGLGLEFLRHVERCSVLVHVLDTATLESERDPLSDLDVIETELREYGGLDNRPRIVVLNKIDVPDGKDLAEMVRPDLEARGYRVFEVSAVAHMGLRELSFALAELVATARAARPKEEATRIVIRPKAVDDAGFTVTREEDGLFRVRGEKPERWVRQTDFNNDEAVGYLSDRLNRLGVEDKLMKAGARNGDGVAIGPEDNAVVFDWEPSVTAGAEMLGRRGEDHRFEAPRPAAQRRRDRDAERDEAQQEFDGFEPF.

An Obg domain is found at 2–159; the sequence is TTFVDRVELH…QDIHLELKTV (158 aa). The interval 60 to 88 is disordered; the sequence is YHHSPHRKATNGKPGEGGNRSGKDGQDLV. An OBG-type G domain is found at 160 to 330; sequence ADVALVGYPS…LSFALAELVA (171 aa). Residues 166–173, 191–195, 212–215, 282–285, and 311–313 each bind GTP; these read GYPSAGKS, FTTLV, DVPG, NKID, and SAV. Mg(2+) is bound by residues Ser173 and Thr193. The OCT domain maps to 348–430; that stretch reads PKAVDDAGFT…DNAVVFDWEP (83 aa). Residues 438-478 are disordered; that stretch reads MLGRRGEDHRFEAPRPAAQRRRDRDAERDEAQQEFDGFEPF. 2 stretches are compositionally biased toward basic and acidic residues: residues 439–450 and 457–468; these read LGRRGEDHRFEA and RRRDRDAERDEA. Residues 469–478 show a composition bias toward acidic residues; sequence QQEFDGFEPF.

It belongs to the TRAFAC class OBG-HflX-like GTPase superfamily. OBG GTPase family. In terms of assembly, monomer. Requires Mg(2+) as cofactor.

It localises to the cytoplasm. It is found in the cell membrane. Its function is as follows. Plays an unknown essential role and a regulatory role in sporulation. Overexpression suppresses sporulation although cell growth rate was not reduced. Impaired differentiation was eliminated by addition of decoyinine, an inhibitor of GMP synthesis. Overexpression has no effect on undecylprodigiosin production, but decreases actinorhodin production. Functionally, an essential GTPase which binds GTP, GDP and possibly (p)ppGpp with moderate affinity, with high nucleotide exchange rates and a fairly low GTP hydrolysis rate. Plays a role in control of the cell cycle, stress response, ribosome biogenesis and in those bacteria that undergo differentiation, in morphogenesis control. The sequence is that of GTPase Obg from Streptomyces coelicolor (strain ATCC BAA-471 / A3(2) / M145).